The primary structure comprises 318 residues: tRNA(Ile)-lysidine synthase (318 aa).

Residue 26 to 31 coordinates ATP; that stretch reads SGGADS.

The protein belongs to the tRNA(Ile)-lysidine synthase family.

The protein localises to the cytoplasm. It carries out the reaction cytidine(34) in tRNA(Ile2) + L-lysine + ATP = lysidine(34) in tRNA(Ile2) + AMP + diphosphate + H(+). Its function is as follows. Ligates lysine onto the cytidine present at position 34 of the AUA codon-specific tRNA(Ile) that contains the anticodon CAU, in an ATP-dependent manner. Cytidine is converted to lysidine, thus changing the amino acid specificity of the tRNA from methionine to isoleucine. This is tRNA(Ile)-lysidine synthase from Nocardia farcinica (strain IFM 10152).